Here is a 300-residue protein sequence, read N- to C-terminus: Homoserine kinase (300 aa).

An ATP-binding site is contributed by 82–92 (RPGSGLGSSAA).

Belongs to the GHMP kinase family. Homoserine kinase subfamily.

Its subcellular location is the cytoplasm. The catalysed reaction is L-homoserine + ATP = O-phospho-L-homoserine + ADP + H(+). It functions in the pathway amino-acid biosynthesis; L-threonine biosynthesis; L-threonine from L-aspartate: step 4/5. Functionally, catalyzes the ATP-dependent phosphorylation of L-homoserine to L-homoserine phosphate. This chain is Homoserine kinase, found in Methanocella arvoryzae (strain DSM 22066 / NBRC 105507 / MRE50).